Consider the following 535-residue polypeptide: Bifunctional purine biosynthesis protein PurH (535 aa).

The MGS-like domain occupies 6–151; sequence TRLPIRRALI…KNHKDVAIVV (146 aa).

It belongs to the PurH family.

It catalyses the reaction (6R)-10-formyltetrahydrofolate + 5-amino-1-(5-phospho-beta-D-ribosyl)imidazole-4-carboxamide = 5-formamido-1-(5-phospho-D-ribosyl)imidazole-4-carboxamide + (6S)-5,6,7,8-tetrahydrofolate. The enzyme catalyses IMP + H2O = 5-formamido-1-(5-phospho-D-ribosyl)imidazole-4-carboxamide. It participates in purine metabolism; IMP biosynthesis via de novo pathway; 5-formamido-1-(5-phospho-D-ribosyl)imidazole-4-carboxamide from 5-amino-1-(5-phospho-D-ribosyl)imidazole-4-carboxamide (10-formyl THF route): step 1/1. It functions in the pathway purine metabolism; IMP biosynthesis via de novo pathway; IMP from 5-formamido-1-(5-phospho-D-ribosyl)imidazole-4-carboxamide: step 1/1. This Pseudomonas fluorescens (strain SBW25) protein is Bifunctional purine biosynthesis protein PurH.